Reading from the N-terminus, the 352-residue chain is Inorganic triphosphatase (352 aa).

The CYTH domain occupies 6-203 (LQEIELKLAI…KRGYLLGSKQ (198 aa)).

The catalysed reaction is triphosphate + H2O = phosphate + diphosphate. Involved in the hydrolysis of the beta-gamma-phosphoanhydride linkage of triphosphate-containing substrates (inorganic or nucleoside-linked). Catalyzes the hydrolysis of inorganic triphosphate (PPPi), which could be cytotoxic because of its high affinity for calcium ion, thereby interfering with calcium signaling. The sequence is that of Inorganic triphosphatase from Haemophilus influenzae (strain ATCC 51907 / DSM 11121 / KW20 / Rd).